Here is a 417-residue protein sequence, read N- to C-terminus: S-adenosylmethionine synthase (417 aa).

Residue His-16 participates in ATP binding. Residue Asp-18 participates in Mg(2+) binding. Residue Glu-44 participates in K(+) binding. L-methionine contacts are provided by Glu-57 and Gln-100. The interval 100-110 (QSPDIAQGVTS) is flexible loop. Residues 175-177 (DGK), 251-252 (KF), Asp-260, 266-267 (RK), Ala-283, and Lys-287 each bind ATP. Asp-260 provides a ligand contact to L-methionine. Lys-291 serves as a coordination point for L-methionine.

This sequence belongs to the AdoMet synthase family. In terms of assembly, homotetramer; dimer of dimers. Requires Mg(2+) as cofactor. The cofactor is K(+).

The protein localises to the cytoplasm. It carries out the reaction L-methionine + ATP + H2O = S-adenosyl-L-methionine + phosphate + diphosphate. It functions in the pathway amino-acid biosynthesis; S-adenosyl-L-methionine biosynthesis; S-adenosyl-L-methionine from L-methionine: step 1/1. In terms of biological role, catalyzes the formation of S-adenosylmethionine (AdoMet) from methionine and ATP. The overall synthetic reaction is composed of two sequential steps, AdoMet formation and the subsequent tripolyphosphate hydrolysis which occurs prior to release of AdoMet from the enzyme. This chain is S-adenosylmethionine synthase, found in Picosynechococcus sp. (strain ATCC 27264 / PCC 7002 / PR-6) (Agmenellum quadruplicatum).